The primary structure comprises 256 residues: 5-oxoprolinase subunit A (256 aa).

This sequence belongs to the LamB/PxpA family. As to quaternary structure, forms a complex composed of PxpA, PxpB and PxpC.

The catalysed reaction is 5-oxo-L-proline + ATP + 2 H2O = L-glutamate + ADP + phosphate + H(+). Functionally, catalyzes the cleavage of 5-oxoproline to form L-glutamate coupled to the hydrolysis of ATP to ADP and inorganic phosphate. This Geobacillus kaustophilus (strain HTA426) protein is 5-oxoprolinase subunit A.